The chain runs to 226 residues: Phosphate propanoyltransferase (226 aa).

A CoA-binding site is contributed by Val44 to Asn46. Positions 48 and 50 each coordinate Zn(2+). Positions 72, 90, and 97 each coordinate CoA. Position 103 (Arg103) interacts with phosphate. Position 109 (Glu109) interacts with Zn(2+). Phe116 lines the CoA pocket. Zn(2+) is bound by residues His157, His159, and His204. A CoA-binding site is contributed by Asn211.

The protein belongs to the PduL family. As to quaternary structure, full-length protein forms large oligomers. Homodimer, when purified in the absence of the encapsulation peptide (EP, residues 1-47). The EP may influence oligomerization. It depends on Zn(2+) as a cofactor.

The protein localises to the bacterial microcompartment. It carries out the reaction propanoyl-CoA + phosphate = propanoyl phosphate + CoA. Its pathway is polyol metabolism; 1,2-propanediol degradation. In terms of biological role, involved in 1,2-propanediol (1,2-PD) utilization within the bacterial microcompartment (BMC) dedicated to 1,2-PD degradation by catalyzing the conversion of propanoyl-CoA to propanoyl-phosphate. CoA is regenerated within the pdu BMC (for use by PduP) via this enzyme, although there must also be cofactor transport across the BMC. Directly targeted to the BMC. Phosphate is probably the first substrate to bind in the forward direction. CoA is probably the first substrate to bind in the reverse direction, and might bind to the enzyme as the BMC assembles, ensuring cofactor encapsulation. The protein is Phosphate propanoyltransferase of Rhodopseudomonas palustris (strain BisB18).